We begin with the raw amino-acid sequence, 132 residues long: MMRGVTMVLLLPMLVWAGSECKARCCLTNISITVESDECGSCITVNTTACTGLCRTQERAYRSPVAPYFQNTCNFRDWTYETIQLPGCPLGVDSSFTYPVALSCECSQCNTEITDCGAFSMQPSSCHTHAYY.

Residues 1 to 17 (MMRGVTMVLLLPMLVWA) form the signal peptide. 5 disulfides stabilise this stretch: Cys-25-Cys-73, Cys-39-Cys-88, Cys-50-Cys-104, Cys-54-Cys-106, and Cys-109-Cys-116. Asn-29 and Asn-46 each carry an N-linked (GlcNAc...) asparagine glycan.

The protein belongs to the glycoprotein hormones subunit beta family. As to quaternary structure, heterodimer of an alpha and a beta chain.

It is found in the secreted. In terms of biological role, involved in gametogenesis and steroidogenesis. The polypeptide is Gonadotropin subunit beta-1 (cgba) (Ictalurus punctatus (Channel catfish)).